The chain runs to 190 residues: uncharacterized protein (190 aa).

One can recognise an HTH tetR-type domain in the interval 1 to 58 (MDKRILAETFRLIKQKGFSFTMNDLAAALGTSKRTLYAYYSSKDQLVEAVVEQFIAEM). A DNA-binding region (H-T-H motif) is located at residues 21-40 (TMNDLAAALGTSKRTLYAYY).

This is an uncharacterized protein from Bacillus subtilis (strain 168).